The following is a 361-amino-acid chain: C3a anaphylatoxin chemotactic receptor (361 aa).

The Extracellular portion of the chain corresponds to methionine 1 to serine 64. Asparagine 36 and asparagine 50 each carry an N-linked (GlcNAc...) asparagine glycan. Residues leucine 65 to isoleucine 85 form a helical membrane-spanning segment. At alanine 86–threonine 96 the chain is on the cytoplasmic side. The chain crosses the membrane as a helical span at residues isoleucine 97–valine 117. Residues alanine 118–lysine 134 are Extracellular-facing. Cysteines 133 and 210 form a disulfide. A helical membrane pass occupies residues isoleucine 135–serine 155. The Cytoplasmic segment spans residues leucine 156–alanine 177. A helical transmembrane segment spans residues arginine 178 to leucine 198. The Extracellular portion of the chain corresponds to arginine 199–serine 224. A helical transmembrane segment spans residues isoleucine 225 to isoleucine 245. Over isoleucine 246–arginine 262 the chain is Cytoplasmic. The chain crosses the membrane as a helical span at residues isoleucine 263 to leucine 283. The Extracellular portion of the chain corresponds to isoleucine 284–proline 301. A helical transmembrane segment spans residues leucine 302–glycine 322. Topologically, residues glutamine 323–leucine 361 are cytoplasmic.

The protein belongs to the G-protein coupled receptor 1 family.

The protein resides in the cell membrane. In terms of biological role, receptor for the chemotactic and inflammatory peptide anaphylatoxin C3a. This receptor stimulates chemotaxis, granule enzyme release and superoxide anion production. The sequence is that of C3a anaphylatoxin chemotactic receptor (c3ar1) from Danio rerio (Zebrafish).